Reading from the N-terminus, the 267-residue chain is CD82 antigen (267 aa).

Topologically, residues 1–11 are cytoplasmic; sequence MGSACIKVTKY. Residue Cys-5 is the site of S-palmitoyl cysteine attachment. Residues 12–32 form a helical membrane-spanning segment; that stretch reads FLFLFNLIFFILGAVILGFGV. Residues 33 to 53 are Extracellular-facing; the sequence is WILADKSSFISVLQTSSSSLR. Residues 54–72 traverse the membrane as a helical segment; the sequence is MGAYVFIGVGAVTMLMGFL. Residues 73 to 83 are Cytoplasmic-facing; it reads GCIGAVNEVRC. Residue Cys-74 is the site of S-palmitoyl cysteine attachment. Residues 84-110 traverse the membrane as a helical segment; that stretch reads LLGLYFAFLLLILIAQVTAGALFYFNM. Over 111-228 the chain is Extracellular; that stretch reads GKLKQEMGGI…KVQAWLQENL (118 aa). N-linked (GlcNAc...) asparagine glycans are attached at residues Asn-129, Asn-157, and Asn-198. A helical membrane pass occupies residues 229 to 250; sequence GIILGVGVGVAIIELLGMVLSI. Topologically, residues 251–267 are cytoplasmic; sequence CLCRHVHSEDYSKVPKY.

This sequence belongs to the tetraspanin (TM4SF) family. In terms of assembly, forms homooligomers. Interacts directly with IGSF8. Interacts with EGFR. Interacts with VEGFA and PDGFB. Interacts with ITGA4. Interacts with ITGA6; this interaction reduces ITGA6 cell surface expression. Interacts with ITGB1. Interacts with TLR4; this interaction inhibits TLR4-mediated signaling pathway. Interacts with TLR9. Interacts with PLAUR. Palmitoylated. Palmitoylation contributes to oligomerization and surface expression. Lymphoid specific.

The protein resides in the cell membrane. Its subcellular location is the cytoplasmic vesicle. It localises to the phagosome. Functionally, structural component of specialized membrane microdomains known as tetraspanin-enriched microdomains (TERMs), which act as platforms for receptor clustering and signaling. Participates thereby in diverse biological functions such as cell signal transduction, adhesion, migration and protein trafficking. Acts as a attenuator of EGF signaling, facilitating ligand-induced endocytosis of the receptor and its subsequent desensitization. Mechanistically, modulates ligand-induced ubiquitination and trafficking of EGFR via E3 ligase CBL phosphorylation by PKC. Increases cell-matrix adhesion by regulating the membrane organization of integrin alpha4/ITA4. Modulates adhesion and suppresses cell migration through other integrins such as the alpha6/ITGA6 and beta1/ITGB1. Decreases cell-associated plasminogen activation by interfering with the interaction between urokinase-type plasminogen activator/PLAU and its receptor PLAUR. Associates with CD4 or CD8 and delivers costimulatory signals for the TCR/CD3 pathway. Plays a role in TLR9 trafficking to acidified CpG-containing compartments by controlling interaction between TLR9 and VAMP3 and subsequent myddosome assembly. Inhibits LPS-induced inflammatory response by preventing binding of LPS to TLR4 on the cell surface. Plays a role in the activation of macrophages into anti-inflammatory phenotypes. Independently of Toll-like receptor (TLR) signaling, is recruited to pathogen-containing phagosomes prior to fusion with lysosomes and thereby participates in antigen presentation. Also acts to control angiogenesis and switch angiogenic milieu to quiescent state by binding and sequestering VEGFA and PDGFB to inhibit the signaling they trigger via their respective cell surface receptor. The polypeptide is CD82 antigen (CD82) (Homo sapiens (Human)).